We begin with the raw amino-acid sequence, 438 residues long: L-cysteine:1D-myo-inositol 2-amino-2-deoxy-alpha-D-glucopyranoside ligase (438 aa).

The segment at 1 to 27 is disordered; the sequence is MDSWTSPDVPALPFTAEGPRVHDTARG. Cys45 provides a ligand contact to Zn(2+). Residues 45-48, Thr60, and 83-85 each bind L-cysteinyl-5'-AMP; these read CGIT and NVT. A 'HIGH' region motif is present at residues 47–57; the sequence is ITPYDATHLGH. Positions 197–202 match the 'ERGGDP' region motif; sequence DRGGDP. Trp238 provides a ligand contact to L-cysteinyl-5'-AMP. Cys242 contributes to the Zn(2+) binding site. 260–262 lines the L-cysteinyl-5'-AMP pocket; the sequence is GDD. His267 is a binding site for Zn(2+). Val293 provides a ligand contact to L-cysteinyl-5'-AMP. Positions 299 to 303 match the 'KMSKS' region motif; that stretch reads KMSKS.

The protein belongs to the class-I aminoacyl-tRNA synthetase family. MshC subfamily. Monomer. Zn(2+) serves as cofactor.

It carries out the reaction 1D-myo-inositol 2-amino-2-deoxy-alpha-D-glucopyranoside + L-cysteine + ATP = 1D-myo-inositol 2-(L-cysteinylamino)-2-deoxy-alpha-D-glucopyranoside + AMP + diphosphate + H(+). In terms of biological role, catalyzes the ATP-dependent condensation of GlcN-Ins and L-cysteine to form L-Cys-GlcN-Ins. The chain is L-cysteine:1D-myo-inositol 2-amino-2-deoxy-alpha-D-glucopyranoside ligase from Kytococcus sedentarius (strain ATCC 14392 / DSM 20547 / JCM 11482 / CCUG 33030 / NBRC 15357 / NCTC 11040 / CCM 314 / 541) (Micrococcus sedentarius).